The chain runs to 235 residues: tRNA pseudouridine synthase B (235 aa).

Asp-48 acts as the Nucleophile in catalysis.

It belongs to the pseudouridine synthase TruB family. Type 1 subfamily.

It catalyses the reaction uridine(55) in tRNA = pseudouridine(55) in tRNA. Its function is as follows. Responsible for synthesis of pseudouridine from uracil-55 in the psi GC loop of transfer RNAs. The chain is tRNA pseudouridine synthase B from Parabacteroides distasonis (strain ATCC 8503 / DSM 20701 / CIP 104284 / JCM 5825 / NCTC 11152).